The chain runs to 215 residues: uncharacterized protein (215 aa).

Residues Ser114, Asp162, and His194 each act as charge relay system in the active site.

The protein belongs to the AB hydrolase superfamily. AB hydrolase 2 family.

This is an uncharacterized protein from Rickettsia prowazekii (strain Madrid E).